The chain runs to 398 residues: S-adenosylmethionine synthase (398 aa).

ATP is bound at residue 136-141 (GTGSSD).

It belongs to the AdoMet synthase 2 family. Requires Mg(2+) as cofactor.

It catalyses the reaction L-methionine + ATP + H2O = S-adenosyl-L-methionine + phosphate + diphosphate. The protein operates within amino-acid biosynthesis; S-adenosyl-L-methionine biosynthesis; S-adenosyl-L-methionine from L-methionine: step 1/1. Catalyzes the formation of S-adenosylmethionine from methionine and ATP. This chain is S-adenosylmethionine synthase, found in Methanosarcina acetivorans (strain ATCC 35395 / DSM 2834 / JCM 12185 / C2A).